A 71-amino-acid chain; its full sequence is Disintegrin horridistatin-2 (71 aa).

The 71-residue stretch at 1 to 71 folds into the Disintegrin domain; that stretch reads GEECDCGSPA…ADCPRNGLYG (71 aa). Cystine bridges form between Cys4/Cys19, Cys6/Cys14, Cys13/Cys36, Cys27/Cys33, Cys32/Cys57, and Cys45/Cys64. A Cell attachment site motif is present at residues 49 to 51; it reads RGD.

Belongs to the venom metalloproteinase (M12B) family. P-II subfamily. P-IIa sub-subfamily. As to quaternary structure, monomer (disintegrin). As to expression, expressed by the venom gland.

Its subcellular location is the secreted. In terms of biological role, inhibits ADP-induced platelet aggregation (IC(50) is 16.2 nM) by binding to alpha-IIb/beta-3 (ITGA2B/ITGB3). In Crotalus horridus (Timber rattlesnake), this protein is Disintegrin horridistatin-2.